A 513-amino-acid polypeptide reads, in one-letter code: uncharacterized protein (513 aa).

The CYTH domain maps to 11 to 219; it reads HLEVERKFDV…SKLARVLGAT (209 aa). The CHAD domain maps to 228-506; sequence PQPPADPVHR…LEAALRKLDK (279 aa).

This is an uncharacterized protein from Mycobacterium tuberculosis (strain CDC 1551 / Oshkosh).